The chain runs to 433 residues: MNVTMHSKKLLKPSIPTPNHLQKLNLSLLDQIQIPFYVGLIFHYETLSDNSDITLSKLESSLSETLTLYYHVAGRYNGTDCVIECNDQGIGYVETAFDVELHQFLLGEESNNLDLLVGLSGFLSETETPPLAAIQLNMFKCGGLVIGAQFNHIIGDMFTMSTFMNSWAKACRVGIKEVAHPTFGLAPLMPSAKVLNIPPPPSFEGVKFVSKRFVFNENAITRLRKEATEEDGDGDDDQKKKRPSRVDLVTAFLSKSLIEMDCAKKEQTKSRPSLMVHMMNLRKRTKLALENDVSGNFFIVVNAESKITVAPKITDLTESLGSACGEIISEVAKVDDAEVVSSMVLNSVREFYYEWGKGEKNVFLYTSWCRFPLYEVDFGWGIPSLVDTTAVPFGLIVLMDEAPAGDGIAVRACLSEHDMIQFQQHHQLLSYVS.

Catalysis depends on proton acceptor residues His-152 and Asp-377.

It belongs to the plant acyltransferase family. Post-translationally, the N-terminus is blocked. In terms of tissue distribution, expressed in petals, style, sepals and stamens. Very low expression in stigma and not detected in leaves.

The enzyme catalyses benzyl alcohol + acetyl-CoA = benzyl acetate + CoA. It carries out the reaction (E)-cinnamyl alcohol + acetyl-CoA = (E)-cinnamyl acetate + CoA. Involved in the biosynthesis of benzyl acetate, a major constituent of the floral scent. Can use benzylalcohol, cinnamylalcohol, 3-cis-hexene-1-ol or heptanol as substrates. Has some activity with 2-phenylethanol and 2-naphtalene-ethanol, but no activity with linalool, 2-hydroxybenzylalcohol, 3-hydroxybenzylalcohol or 4-hydroxybenzylalcohol. In Clarkia breweri (Fairy fans), this protein is Acetyl-CoA-benzylalcohol acetyltransferase (BEAT).